We begin with the raw amino-acid sequence, 644 residues long: CTP synthase (644 aa).

The Glutamine amidotransferase type-1 domain occupies 300–551 (SIAIVGKYTK…LGLILASVDR (252 aa)). Catalysis depends on for GATase activity residues C399, H527, and E529.

The protein belongs to the CTP synthase family.

It catalyses the reaction UTP + L-glutamine + ATP + H2O = CTP + L-glutamate + ADP + phosphate + 2 H(+). It functions in the pathway pyrimidine metabolism; CTP biosynthesis via de novo pathway; CTP from UDP: step 2/2. Catalyzes the ATP-dependent amination of UTP to CTP with either L-glutamine or ammonia as the source of nitrogen. Constitutes the rate-limiting enzyme in the synthesis of cytosine nucleotides. The polypeptide is CTP synthase (Drosophila pseudoobscura pseudoobscura (Fruit fly)).